A 407-amino-acid chain; its full sequence is Peptidase T (407 aa).

Residue H82 participates in Zn(2+) binding. D84 is a catalytic residue. D143 is a Zn(2+) binding site. The Proton acceptor role is filled by E177. Residues E178, D200, and H382 each contribute to the Zn(2+) site.

Belongs to the peptidase M20B family. The cofactor is Zn(2+).

It is found in the cytoplasm. It carries out the reaction Release of the N-terminal residue from a tripeptide.. In terms of biological role, cleaves the N-terminal amino acid of tripeptides. This Streptococcus uberis (strain ATCC BAA-854 / 0140J) protein is Peptidase T.